The sequence spans 80 residues: Histone H1.M6.1 (80 aa).

The interval methionine 1–lysine 80 is disordered. Residues alanine 11–lysine 80 show a composition bias toward basic residues.

It localises to the nucleus. The protein localises to the chromosome. The sequence is that of Histone H1.M6.1 from Trypanosoma cruzi.